A 178-amino-acid polypeptide reads, in one-letter code: tRNA (cytidine(56)-2'-O)-methyltransferase (178 aa).

Position 88 (leucine 88) interacts with S-adenosyl-L-methionine.

The protein belongs to the aTrm56 family. Homodimer.

The protein localises to the cytoplasm. It carries out the reaction cytidine(56) in tRNA + S-adenosyl-L-methionine = 2'-O-methylcytidine(56) in tRNA + S-adenosyl-L-homocysteine + H(+). In terms of biological role, specifically catalyzes the AdoMet-dependent 2'-O-ribose methylation of cytidine at position 56 in tRNAs. The sequence is that of tRNA (cytidine(56)-2'-O)-methyltransferase from Methanopyrus kandleri (strain AV19 / DSM 6324 / JCM 9639 / NBRC 100938).